The primary structure comprises 627 residues: Chaperone protein HtpG (627 aa).

The tract at residues 1–339 (MKGQETRGFQ…SNDLPLNVSR (339 aa)) is a; substrate-binding. The tract at residues 340–555 (EILQDSRVTQ…ADEMSTQMAK (216 aa)) is b. The c stretch occupies residues 556 to 627 (LFAAAGQQAP…IRRMNQLLSA (72 aa)).

It belongs to the heat shock protein 90 family. In terms of assembly, homodimer.

The protein localises to the cytoplasm. Molecular chaperone. Has ATPase activity. The polypeptide is Chaperone protein HtpG (Pectobacterium atrosepticum (strain SCRI 1043 / ATCC BAA-672) (Erwinia carotovora subsp. atroseptica)).